The sequence spans 405 residues: Arginine biosynthesis bifunctional protein ArgJ (405 aa).

Residues T152, K178, T189, E276, N400, and T405 each contribute to the substrate site. The Nucleophile role is filled by T189.

It belongs to the ArgJ family. Heterotetramer of two alpha and two beta chains.

The protein localises to the cytoplasm. The enzyme catalyses N(2)-acetyl-L-ornithine + L-glutamate = N-acetyl-L-glutamate + L-ornithine. It carries out the reaction L-glutamate + acetyl-CoA = N-acetyl-L-glutamate + CoA + H(+). The protein operates within amino-acid biosynthesis; L-arginine biosynthesis; L-ornithine and N-acetyl-L-glutamate from L-glutamate and N(2)-acetyl-L-ornithine (cyclic): step 1/1. It participates in amino-acid biosynthesis; L-arginine biosynthesis; N(2)-acetyl-L-ornithine from L-glutamate: step 1/4. Catalyzes two activities which are involved in the cyclic version of arginine biosynthesis: the synthesis of N-acetylglutamate from glutamate and acetyl-CoA as the acetyl donor, and of ornithine by transacetylation between N(2)-acetylornithine and glutamate. This chain is Arginine biosynthesis bifunctional protein ArgJ, found in Pseudomonas savastanoi pv. phaseolicola (strain 1448A / Race 6) (Pseudomonas syringae pv. phaseolicola (strain 1448A / Race 6)).